The following is a 205-amino-acid chain: Dephospho-CoA kinase (205 aa).

In terms of domain architecture, DPCK spans 3 to 204 (KVGLTGGIGA…HRAHQPGESQ (202 aa)). 11 to 16 (GAGKSE) contacts ATP.

This sequence belongs to the CoaE family.

It localises to the cytoplasm. It carries out the reaction 3'-dephospho-CoA + ATP = ADP + CoA + H(+). It participates in cofactor biosynthesis; coenzyme A biosynthesis; CoA from (R)-pantothenate: step 5/5. Its function is as follows. Catalyzes the phosphorylation of the 3'-hydroxyl group of dephosphocoenzyme A to form coenzyme A. In Streptomyces avermitilis (strain ATCC 31267 / DSM 46492 / JCM 5070 / NBRC 14893 / NCIMB 12804 / NRRL 8165 / MA-4680), this protein is Dephospho-CoA kinase.